The following is a 568-amino-acid chain: Estrogen receptor beta (568 aa).

Positions 1-177 (MHQQSPVDDV…SLRGKADMHY (177 aa)) are modulating. 2 NR C4-type zinc fingers span residues 178–198 (CAVC…CEGC) and 214–238 (CPAT…LRKC). A DNA-binding region (nuclear receptor) is located at residues 178-243 (CAVCSDYASG…RLRKCYEVGM (66 aa)). One can recognise an NR LBD domain in the interval 300–536 (TPEELIARIM…DLLLEMLDAH (237 aa)).

Belongs to the nuclear hormone receptor family. NR3 subfamily. Binds DNA as a homodimer. Can form a heterodimer with ER-alpha.

Its subcellular location is the nucleus. Functionally, binds estrogens with an affinity similar to that of ER-alpha, and activates expression of reporter genes containing estrogen response elements (ERE) in an estrogen-dependent manner. The protein is Estrogen receptor beta (esr2) of Oncorhynchus mykiss (Rainbow trout).